We begin with the raw amino-acid sequence, 374 residues long: Potassium channel subfamily K member 9 (374 aa).

Topologically, residues 1 to 8 are cytoplasmic; sequence MKRQNVRT. The chain crosses the membrane as a helical span at residues 9-29; it reads LSLIVCTFTYLLVGAAVFDAL. Topologically, residues 30-88 are extracellular; it reads ESDHEMREEEKLKAEEIRIKGKYNISSEDYRQLELVILQSEPHRAGVQWKFAGSFYFAI. An N-linked (GlcNAc...) asparagine glycan is attached at Asn-53. Positions 89-101 form an intramembrane region, pore-forming; sequence TVITTIGYGHAAP. The K(+) site is built by Thr-93, Ile-94, Gly-95, and Tyr-96. The selectivity filter 1 stretch occupies residues 93–98; that stretch reads TIGYGH. The Extracellular segment spans residues 102–107; sequence GTDAGK. The helical transmembrane segment at 108-128 threads the bilayer; the sequence is AFCMFYAVLGIPLTLVMFQSL. The Cytoplasmic portion of the chain corresponds to 129-158; the sequence is GERMNTFVRYLLKRIKKCCGMRNTDVSMEN. The chain crosses the membrane as a helical span at residues 159–179; the sequence is MVTVGFFSCMGTLCIGAAAFS. The Extracellular segment spans residues 180–194; that stretch reads QCEEWSFFHAYYYCF. An intramembrane region (pore-forming) is located at residues 195 to 207; the sequence is ITLTTIGFGDYVA. Residues Thr-199, Ile-200, Gly-201, and Phe-202 each coordinate K(+). The segment at 199-204 is selectivity filter 2; it reads TIGFGD. Over 208-218 the chain is Extracellular; sequence LQTKGALQKKP. A helical transmembrane segment spans residues 219-239; it reads LYVAFSFMYILVGLTVIGAFL. Residues 240–374 lie on the Cytoplasmic side of the membrane; it reads NLVVLRFLTM…QRLMKRRKSV (135 aa). Residues 243–248 are X-gate; sequence VLRFLT.

It belongs to the two pore domain potassium channel (TC 1.A.1.8) family. In terms of assembly, homodimer. Heterodimer with KCNK1. Heterodimer with KCNK3. As to expression, mainly found in the cerebellum. Also found in adrenal gland, kidney and lung.

The protein resides in the cell membrane. It localises to the mitochondrion inner membrane. It is found in the cell projection. The protein localises to the dendrite. The catalysed reaction is K(+)(in) = K(+)(out). It carries out the reaction Na(+)(in) = Na(+)(out). With respect to regulation, inhibited by extracellular acidification adopting a nonconductive conformation at pH 6.0. Inhibited by phorbol 12-myristate 13-acetate (PMA). K(+) channel that conducts voltage-dependent outward rectifying currents upon membrane depolarization. Voltage sensing is coupled to K(+) electrochemical gradient in an 'ion flux gating' mode where outward but not inward ion flow opens the gate. Changes ion selectivity and becomes permeable to Na(+) ions in response to extracellular acidification. Protonation of the pH sensor His-98 stabilizes C-type inactivation conformation likely converting the channel from outward K(+)-conducting, to inward Na(+)-conducting to nonconductive state. Homo- and heterodimerizes to form functional channels with distinct regulatory and gating properties. Allows K(+) currents with fast-gating kinetics important for the repolarization and hyperpolarization phases of action potentials. In granule neurons, hyperpolarizes the resting membrane potential to limit intrinsic neuronal excitability, but once the action potential threshold is reached, supports high-frequency action potential firing and increased neuronal excitability. Homomeric and/or heteromeric KCNK3:KCNK9 channels operate in cerebellar granule cells, whereas heteromeric KCNK1:KCNK9 enables currents in hippocampal dentate gyrus granule neurons. Dispensable for central chemosensory respiration i.e. breathing controlled by brainstem CO2/pH, it rather conducts pH-sensitive currents and controls the firing rate of serotonergic raphe neurons involved in potentiation of the respiratory chemoreflex. In retinal ganglion cells, mediates outward currents that regulate action potentials in response to acidification of the synaptic cleft. Involved in transmission of image-forming and nonimage-forming visual information in the retina. In adrenal gland, contributes to the maintenance of a hyperpolarized resting membrane potential of aldosterone-producing cells at zona glomerulosa and limits aldosterone release as part of a regulatory mechanism that controls arterial blood pressure and electrolyte homeostasis. The polypeptide is Potassium channel subfamily K member 9 (Homo sapiens (Human)).